Here is a 2006-residue protein sequence, read N- to C-terminus: MAQSVLVPPGPDSFRFFTRESLAAIEQRIAEEKAKRPKQERKDEDDENGPKPNSDLEAGKSLPFIYGDIPPEMVSEPLEDLDPYYINKKTFIVLNKGKAISRFSATSALYILTPFNPIRKLAIKILVHSLFNVLIMCTILTNCVFMTMSNPPDWTKNVEYTFTGIYTFESLIKILARGFCLEDFTFLRDPWNWLDFTVITFAYVTEFVNLGNVSALRTFRVLRALKTISVIPGLKTIVGALIQSVKKLSDVMILTVFCLSVFALIGLQLFMGNLRNKCLQWPPDNSTFEINITSFFNNSLDWNGTAFNRTMNMFNWDEYIEDKSHFYFLEGQNDALLCGNSSDAGQCPEGYICVKAGRNPNYGYTSFDTFSWAFLSLFRLMTQDFWENLYQLTLRAAGKTYMIFFVLVIFLGSFYLINLILAVVAMAYEEQNQATLEEAEQKEAEFQQMLEQLKKQQEEAQAAAAAASAESRDFSGAGGIGVFSESSSVASKLSSKSEKELKNRRKKKKQKEQAGEEEKEDAVRKSASEDSIRKKGFRFSLEGSRLTYEKRFSSPHQSLLSIRGSLFSPRRNSRASLFSFKGRVKDIGSENDFADDEHSTFEDNDSRRDSLFVPHRHGERRPSNVSQASRASRGIPTLPMNGKMHSAVDCNGVVSLVGGPSALTSPVGQLLPEGTTTETEIRKRRSSSYHVSMDLLEDPTSRQRAMSMASILTNTMEELEESRQKCPPCWYKFANMCLIWDCCKPWLKVKHVVNLVVMDPFVDLAITICIVLNTLFMAMEHYPMTEQFSSVLSVGNLVFTGIFTAEMFLKIIAMDPYYYFQEGWNIFDGFIVSLSLMELGLANVEGLSVLRSFRLLRVFKLAKSWPTLNMLIKIIGNSVGALGNLTLVLAIIVFIFAVVGMQLFGKSYKECVCKISNDCELPRWHMHDFFHSFLIVFRVLCGEWIETMWDCMEVAGQTMCLTVFMMVMVIGNLVVLNLFLALLLSSFSSDNLAATDDDNEMNNLQIAVGRMQKGIDFVKRKIREFIQKAFVRKQKALDEIKPLEDLNNKKDSCISNHTTIEIGKDLNYLKDGNGTTSGIGSSVEKYVVDESDYMSFINNPSLTVTVPIAVGESDFENLNTEEFSSESDMEESKEKLNATSSSEGSTVDIGAPAEGEQPEAEPEESLEPEACFTEDCVRKFKCCQISIEEGKGKLWWNLRKTCYKIVEHNWFETFIVFMILLSSGALAFEDIYIEQRKTIKTMLEYADKVFTYIFILEMLLKWVAYGFQMYFTNAWCWLDFLIVDVSLVSLTANALGYSELGAIKSLRTLRALRPLRALSRFEGMRVVVNALLGAIPSIMNVLLVCLIFWLIFSIMGVNLFAGKFYHCINYTTGEMFDVSVVNNYSECQALIESNQTARWKNVKVNFDNVGLGYLSLLQVATFKGWMDIMYAAVDSRNVELQPKYEDNLYMYLYFVIFIIFGSFFTLNLFIGVIIDNFNQQKKKFGGQDIFMTEEQKKYYNAMKKLGSKKPQKPIPRPANKFQGMVFDFVTKQVFDISIMILICLNMVTMMVETDDQSQEMTNILYWINLVFIVLFTGECVLKLISLRHYYFTIGWNIFDFVVVILSIVGMFLAELIEKYFVSPTLFRVIRLARIGRILRLIKGAKGIRTLLFALMMSLPALFNIGLLLFLVMFIYAIFGMSNFAYVKREVGIDDMFNFETFGNSMICLFQITTSAGWDGLLAPILNSGPPDCDPEKDHPGSSVKGDCGNPSVGIFFFVSYIIISFLVVVNMYIAVILENFSVATEESAEPLSEDDFEMFYEVWEKFDPDATQFIEFCKLSDFAAALDPPLLIAKPNKVQLIAMDLPMVSGDRIHCLDILFAFTKRVLGESGEMDALRIQMEERFMASNPSKVSYEPITTTLKRKQEEVSAIVIQRAYRRYLLKQKVKKVSSIYKKDKGKEDEGTPIKEDIITDKLNENSTPEKTDVTPSTTSPPSYDSVTKPEKEKFEKDKSEKEDKGKDIRESKK.

At serine 4 the chain carries Phosphoserine. The disordered stretch occupies residues 28–61; sequence RIAEEKAKRPKQERKDEDDENGPKPNSDLEAGKS. Residue lysine 38 forms a Glycyl lysine isopeptide (Lys-Gly) (interchain with G-Cter in SUMO1) linkage. The I repeat unit spans residues 111-456; the sequence is ILTPFNPIRK…QQMLEQLKKQ (346 aa). Residues 130–148 traverse the membrane as a helical segment; that stretch reads LFNVLIMCTILTNCVFMTM. The chain crosses the membrane as a helical span at residues 156-176; sequence KNVEYTFTGIYTFESLIKILA. Residues 191-208 form a helical membrane-spanning segment; the sequence is WNWLDFTVITFAYVTEFV. Residues 215 to 231 traverse the membrane as a helical segment; that stretch reads ALRTFRVLRALKTISVI. The chain crosses the membrane as a helical span at residues 251–270; it reads VMILTVFCLSVFALIGLQLF. The cysteines at positions 278 and 338 are disulfide-linked. Asparagine 285, asparagine 291, asparagine 297, asparagine 303, asparagine 308, and asparagine 340 each carry an N-linked (GlcNAc...) asparagine glycan. Positions 370-394 form an intramembrane region, pore-forming; that stretch reads FSWAFLSLFRLMTQDFWENLYQLTL. The chain crosses the membrane as a helical span at residues 402 to 422; sequence MIFFVLVIFLGSFYLINLILA. Residues serine 468, serine 471, serine 484, serine 526, serine 528, serine 531, serine 553, serine 554, serine 558, serine 573, serine 576, serine 589, serine 610, serine 623, serine 687, serine 688, and serine 722 each carry the phosphoserine modification. The disordered stretch occupies residues 494–529; that stretch reads SSKSEKELKNRRKKKKQKEQAGEEEKEDAVRKSASE. Positions 511-529 are enriched in basic and acidic residues; that stretch reads KEQAGEEEKEDAVRKSASE. A disordered region spans residues 589–635; sequence SENDFADDEHSTFEDNDSRRDSLFVPHRHGERRPSNVSQASRASRGI. The segment covering 596–610 has biased composition (basic and acidic residues); that stretch reads DEHSTFEDNDSRRDS. One copy of the II repeat lies at 742–1014; it reads CCKPWLKVKH…QIAVGRMQKG (273 aa). The helical transmembrane segment at 761–779 threads the bilayer; it reads FVDLAITICIVLNTLFMAM. The chain crosses the membrane as a helical span at residues 791-810; it reads VLSVGNLVFTGIFTAEMFLK. A helical transmembrane segment spans residues 825–844; sequence NIFDGFIVSLSLMELGLANV. A helical transmembrane segment spans residues 847-864; that stretch reads LSVLRSFRLLRVFKLAKS. A helical transmembrane segment spans residues 881–899; it reads ALGNLTLVLAIIVFIFAVV. Cysteine 913 and cysteine 919 are disulfide-bonded. The interval 918-919 is binds SCN2B; that stretch reads DC. Positions 929–949 form an intramembrane region, pore-forming; that stretch reads FFHSFLIVFRVLCGEWIETMW. Residues cysteine 951 and cysteine 960 are joined by a disulfide bond. The chain crosses the membrane as a helical span at residues 963 to 983; the sequence is VFMMVMVIGNLVVLNLFLALL. Residues 1121 to 1167 are disordered; that stretch reads EEFSSESDMEESKEKLNATSSSEGSTVDIGAPAEGEQPEAEPEESLE. The span at 1156–1167 shows a compositional bias: acidic residues; that stretch reads EQPEAEPEESLE. An III repeat occupies 1191 to 1505; the sequence is KGKLWWNLRK…KKYYNAMKKL (315 aa). Residues 1211 to 1228 form a helical membrane-spanning segment; it reads FETFIVFMILLSSGALAF. The chain crosses the membrane as a helical span at residues 1242–1260; that stretch reads MLEYADKVFTYIFILEMLL. Residues 1275–1293 traverse the membrane as a helical segment; that stretch reads WCWLDFLIVDVSLVSLTAN. Residues 1302–1320 form a helical membrane-spanning segment; the sequence is AIKSLRTLRALRPLRALSR. The helical transmembrane segment at 1338 to 1357 threads the bilayer; the sequence is IMNVLLVCLIFWLIFSIMGV. The cysteines at positions 1367 and 1387 are disulfide-linked. Residues 1410–1431 constitute an intramembrane region (pore-forming); sequence GLGYLSLLQVATFKGWMDIMYA. Residues 1449-1470 form a helical membrane-spanning segment; the sequence is YMYLYFVIFIIFGSFFTLNLFI. Position 1507 is a phosphoserine (serine 1507). The stretch at 1514–1812 is one IV repeat; sequence IPRPANKFQG…WEKFDPDATQ (299 aa). Residues 1534-1551 traverse the membrane as a helical segment; sequence FDISIMILICLNMVTMMV. Residues 1563 to 1581 form a helical membrane-spanning segment; the sequence is ILYWINLVFIVLFTGECVL. A helical transmembrane segment spans residues 1594–1611; it reads GWNIFDFVVVILSIVGMF. A helical membrane pass occupies residues 1625-1641; it reads LFRVIRLARIGRILRLI. The helical transmembrane segment at 1661-1678 threads the bilayer; sequence LFNIGLLLFLVMFIYAIF. An intramembrane region (pore-forming) is located at residues 1701–1723; sequence FGNSMICLFQITTSAGWDGLLAP. A disulfide bridge connects residues cysteine 1732 and cysteine 1747. The helical transmembrane segment at 1754–1776 threads the bilayer; sequence IFFFVSYIIISFLVVVNMYIAVI. The IQ domain maps to 1906 to 1935; it reads EEVSAIVIQRAYRRYLLKQKVKKVSSIYKK. Position 1931 is a phosphoserine (serine 1931). Residues 1934-1965 show a composition bias toward basic and acidic residues; sequence KKDKGKEDEGTPIKEDIITDKLNENSTPEKTD. Residues 1934–2006 form a disordered region; it reads KKDKGKEDEG…KGKDIRESKK (73 aa). Phosphothreonine occurs at positions 1944, 1964, and 1967. Serine 1972 carries the post-translational modification Phosphoserine. Residues 1980–2006 are compositionally biased toward basic and acidic residues; it reads TKPEKEKFEKDKSEKEDKGKDIRESKK.

It belongs to the sodium channel (TC 1.A.1.10) family. Nav1.2/SCN2A subfamily. Heterooligomer of a large alpha subunit and a smaller beta subunit. Heterooligomer with SCN2B or SCN4B; disulfide-linked. Interacts with NEDD4L. Interacts with CALM. Interacts with TMEM233. Post-translationally, sumoylated at Lys-38. Sumoylation is induced by hypoxia, increases voltage-gated sodium current and mediates the early response to acute hypoxia in neurons. Sumoylated SCN2A is located at the cell membrane. In terms of tissue distribution, expressed in brain (at protein level). Detected in hippocampus, cortex and brain stem.

The protein resides in the cell membrane. The catalysed reaction is Na(+)(in) = Na(+)(out). In terms of biological role, mediates the voltage-dependent sodium ion permeability of excitable membranes. Assuming opened or closed conformations in response to the voltage difference across the membrane, the protein forms a sodium-selective channel through which Na(+) ions may pass in accordance with their electrochemical gradient. Implicated in the regulation of hippocampal replay occurring within sharp wave ripples (SPW-R) important for memory. The polypeptide is Sodium channel protein type 2 subunit alpha (Mus musculus (Mouse)).